A 522-amino-acid polypeptide reads, in one-letter code: Sensory neuron membrane protein 1 (522 aa).

At 1–11 (MKLPKHLKFAA) the chain is on the cytoplasmic side. Residues 12–32 (GAGGAFLFGILFGWVMFPAIL) traverse the membrane as a helical segment. Residues 33–455 (KGQLKKEMAL…KFQLFYPKKA (423 aa)) lie on the Extracellular side of the membrane. Asparagine 67 and asparagine 229 each carry an N-linked (GlcNAc...) asparagine glycan. Intrachain disulfides connect cysteine 268/cysteine 333, cysteine 297/cysteine 350, and cysteine 335/cysteine 339. N-linked (GlcNAc...) asparagine glycosylation occurs at asparagine 438. A helical transmembrane segment spans residues 456 to 476 (VGVIKWLLVTFGGFGLIGCTI). The Cytoplasmic segment spans residues 477 to 522 (YHYKDRIMSFASSPGSAAVTKVKPEEVEQKDVSVIGQPQEPAKINM).

Belongs to the CD36 family.

It is found in the cell membrane. Its function is as follows. Plays an olfactory role that is not restricted to pheromone sensitivity. The sequence is that of Sensory neuron membrane protein 1 from Plutella xylostella (Diamondback moth).